We begin with the raw amino-acid sequence, 342 residues long: MESLNVNAKNWKALIKPAQLDVKISDDKSHAKIIAEPLEKGYGLTLGNSLRRILLSSIRGAAVTSIQIDGVLHEFTSIKGVREDVTDIVLNVKSLALKSSSETTKKLILDAKGPGEIKASDIAPVADIEILNPDLVICNLDENTHFHMEMNVGTGKGYVPAVMNKPEEPPLGLIAIDSLYSPVKKVSYSISTAREGKALDYDKLIMEVETNGSISAEDAVAYSARIFQDQLNMFVNFDEPVEVPVKEVSSEPEFNKNLLRKVDELELSVRSMNCLKNDNIIYIGDLVQKSEGEMLRTPNFGRKSLNEIKEVLTGMSLYLGMEIPNWPPENIAEMSKKLEEQI.

The interval 1 to 238 (MESLNVNAKN…DQLNMFVNFD (238 aa)) is alpha N-terminal domain (alpha-NTD). Residues 254-342 (FNKNLLRKVD…EMSKKLEEQI (89 aa)) form an alpha C-terminal domain (alpha-CTD) region.

Belongs to the RNA polymerase alpha chain family. As to quaternary structure, homodimer. The RNAP catalytic core consists of 2 alpha, 1 beta, 1 beta' and 1 omega subunit. When a sigma factor is associated with the core the holoenzyme is formed, which can initiate transcription.

The enzyme catalyses RNA(n) + a ribonucleoside 5'-triphosphate = RNA(n+1) + diphosphate. Functionally, DNA-dependent RNA polymerase catalyzes the transcription of DNA into RNA using the four ribonucleoside triphosphates as substrates. The sequence is that of DNA-directed RNA polymerase subunit alpha from Pelagibacter ubique (strain HTCC1062).